An 82-amino-acid chain; its full sequence is Cyclin-dependent protein kinase inhibitor SMR5 (82 aa).

Residues 1–26 (MEEKNYDDGDTVTVDDDYQMGCTTPT) form a disordered region. Over residues 8–18 (DGDTVTVDDDY) the composition is skewed to acidic residues.

Interacts with CDKA-1 and D-type cyclins. Expressed in columella cells in the roots and in root meristems after induction.

Its function is as follows. Probable cyclin-dependent protein kinase (CDK) inhibitor that functions as a repressor of mitosis in the endoreduplication cell cycle. Acts as a potent cell cycle inhibitor, regulating a hydroxyurea-dependent checkpoint in leaves. Essential to activate a high-light-dependent cell cycle checkpoint. The chain is Cyclin-dependent protein kinase inhibitor SMR5 from Arabidopsis thaliana (Mouse-ear cress).